The primary structure comprises 122 residues: Lectin A (122 aa).

Ca(2+) is bound at residue Y38. Residues E44, Q57, and D96 each contribute to the an alpha-D-galactoside site. The Ca(2+) site is built by D96, T100, D103, and N104. D103 lines the an alpha-D-galactoside pocket.

The protein belongs to the LecA/PllA lectin family. Homotetramer.

Functionally, lectin that specifically binds alpha-galactoside-terminating glycoconjugates. Shows high apparent binding to the alpha-Gal epitope (Gal-alpha-1,3-Gal-beta-1,4-GlcNAc terminating glycans) as well as to Gal-alpha-1,4-GlcNAc and Gal-alpha-1,3-GalNAc. Gal-alpha-1,3-GalNAc may be one natural ligand bound by PllA both in the nematode symbiont and in infected insects. The protein is Lectin A of Photorhabdus laumondii subsp. laumondii (strain DSM 15139 / CIP 105565 / TT01) (Photorhabdus luminescens subsp. laumondii).